The following is a 42-amino-acid chain: DRDSCVDKSRCSKYGYYQECQDCCKKAGHNGGTCMFFKCKCA.

Intrachain disulfides connect Cys5/Cys23, Cys11/Cys34, Cys20/Cys39, and Cys24/Cys41.

This sequence belongs to the ergtoxin family. Gamma-KTx 1 subfamily. In terms of tissue distribution, expressed by the venom gland.

It localises to the secreted. In terms of biological role, blocks Kv11/ERG potassium channels. The polypeptide is Potassium channel toxin gamma-KTx 1.5 (Centruroides limpidus (Mexican scorpion)).